The primary structure comprises 398 residues: Phosphoglycerate kinase (398 aa).

Residues 21-23 (DIN), arginine 37, 60-63 (HQGR), arginine 117, and arginine 157 contribute to the substrate site. Residues glutamate 332 and 357 to 360 (GGDT) contribute to the ATP site.

It belongs to the phosphoglycerate kinase family. As to quaternary structure, monomer.

The protein resides in the cytoplasm. The enzyme catalyses (2R)-3-phosphoglycerate + ATP = (2R)-3-phospho-glyceroyl phosphate + ADP. It functions in the pathway carbohydrate degradation; glycolysis; pyruvate from D-glyceraldehyde 3-phosphate: step 2/5. The protein is Phosphoglycerate kinase of Halobacterium salinarum (strain ATCC 29341 / DSM 671 / R1).